We begin with the raw amino-acid sequence, 584 residues long: Sulfite reductase [NADPH] hemoprotein beta-component (584 aa).

[4Fe-4S] cluster contacts are provided by cysteine 447, cysteine 453, cysteine 492, and cysteine 496. Cysteine 496 is a siroheme binding site.

Belongs to the nitrite and sulfite reductase 4Fe-4S domain family. As to quaternary structure, alpha(8)-beta(8). The alpha component is a flavoprotein, the beta component is a hemoprotein. It depends on siroheme as a cofactor. Requires [4Fe-4S] cluster as cofactor.

It carries out the reaction hydrogen sulfide + 3 NADP(+) + 3 H2O = sulfite + 3 NADPH + 4 H(+). The protein operates within sulfur metabolism; hydrogen sulfide biosynthesis; hydrogen sulfide from sulfite (NADPH route): step 1/1. Its function is as follows. Component of the sulfite reductase complex that catalyzes the 6-electron reduction of sulfite to sulfide. This is one of several activities required for the biosynthesis of L-cysteine from sulfate. The protein is Sulfite reductase [NADPH] hemoprotein beta-component of Colwellia psychrerythraea (strain 34H / ATCC BAA-681) (Vibrio psychroerythus).